Reading from the N-terminus, the 115-residue chain is Nitrogenase-stabilizing/protective protein NifW (115 aa).

This sequence belongs to the NifW family. As to quaternary structure, homotrimer; associates with NifD.

Its function is as follows. May protect the nitrogenase Fe-Mo protein from oxidative damage. This chain is Nitrogenase-stabilizing/protective protein NifW, found in Methylobacterium sp. (strain 4-46).